The chain runs to 559 residues: Leucine-rich repeat protein soc-2 (559 aa).

Basic and acidic residues predominate over residues M1–R17. The interval M1–G55 is disordered. LRR repeat units lie at residues Q74–L95, Q97–L118, N120–L141, S143–I164, S166–L187, K189–L210, S212–C233, A235–T257, N258–C279, Q281–M302, K305–Q326, P329–K350, R353–W374, S376–L397, N399–L420, K422–L443, H445–L466, S468–L489, S491–C513, and S515–G536.

It belongs to the SHOC2 family. As to quaternary structure, interacts with let-60.

Acts as a Ras effector and participates in MAPK pathway activation. Probably acts as a scaffolding protein in a protein phosphatase complex that specifically dephosphorylates Raf kinase and stimulates Raf activity at specialized signaling complexes upon Ras activation. Required for vulval development. Involved in fluid homeostasis. Plays a role in nicotinic acetylcholine receptor (nAChR)-mediated sensitivity to nicotine. This chain is Leucine-rich repeat protein soc-2 (soc-2), found in Caenorhabditis briggsae.